Consider the following 494-residue polypeptide: DNA-directed DNA/RNA polymerase mu (494 aa).

The interval 1–24 (MLPKRRRARVGSPSGDAASSTPPS) is disordered. Ser-12 bears the Phosphoserine mark. The BRCT domain maps to 22–122 (PPSTRFPGVA…QPVPVECRHR (101 aa)). The involved in ssDNA binding stretch occupies residues 323–332 (RGKLQGHDVD). Mg(2+)-binding residues include Asp-330, Asp-332, and Asp-418.

The protein belongs to the DNA polymerase type-X family. Requires Mg(2+) as cofactor. Expressed in a number of tissues. Abundant in thymus.

The protein resides in the nucleus. It catalyses the reaction DNA(n) + a 2'-deoxyribonucleoside 5'-triphosphate = DNA(n+1) + diphosphate. Functionally, gap-filling polymerase involved in repair of DNA double-strand breaks by non-homologous end joining (NHEJ). Participates in immunoglobulin (Ig) light chain gene rearrangement in V(D)J recombination. The chain is DNA-directed DNA/RNA polymerase mu (POLM) from Homo sapiens (Human).